Here is an 831-residue protein sequence, read N- to C-terminus: DNA ligase (831 aa).

NAD(+) contacts are provided by residues aspartate 34–aspartate 38, serine 83–leucine 84, and glutamate 114. The N6-AMP-lysine intermediate role is filled by lysine 116. 4 residues coordinate NAD(+): arginine 137, glutamate 174, lysine 291, and lysine 315. The Zn(2+) site is built by cysteine 409, cysteine 412, cysteine 427, and cysteine 433. Residues alanine 749–glutamine 831 form the BRCT domain.

Belongs to the NAD-dependent DNA ligase family. LigA subfamily. Mg(2+) is required as a cofactor. Mn(2+) serves as cofactor.

It catalyses the reaction NAD(+) + (deoxyribonucleotide)n-3'-hydroxyl + 5'-phospho-(deoxyribonucleotide)m = (deoxyribonucleotide)n+m + AMP + beta-nicotinamide D-nucleotide.. DNA ligase that catalyzes the formation of phosphodiester linkages between 5'-phosphoryl and 3'-hydroxyl groups in double-stranded DNA using NAD as a coenzyme and as the energy source for the reaction. It is essential for DNA replication and repair of damaged DNA. The protein is DNA ligase of Xylella fastidiosa (strain 9a5c).